The chain runs to 447 residues: Tubulin beta-2 chain (447 aa).

GTP contacts are provided by Q11, E69, S138, G142, T143, G144, N204, and N226. E69 is a binding site for Mg(2+). The segment at 426 to 447 (QDAGVDEEEEEYEEEAPLEEEV) is disordered. The span at 429-447 (GVDEEEEEYEEEAPLEEEV) shows a compositional bias: acidic residues.

This sequence belongs to the tubulin family. Dimer of alpha and beta chains. A typical microtubule is a hollow water-filled tube with an outer diameter of 25 nm and an inner diameter of 15 nM. Alpha-beta heterodimers associate head-to-tail to form protofilaments running lengthwise along the microtubule wall with the beta-tubulin subunit facing the microtubule plus end conferring a structural polarity. Microtubules usually have 13 protofilaments but different protofilament numbers can be found in some organisms and specialized cells. It depends on Mg(2+) as a cofactor.

It is found in the cytoplasm. It localises to the cytoskeleton. Functionally, tubulin is the major constituent of microtubules, a cylinder consisting of laterally associated linear protofilaments composed of alpha- and beta-tubulin heterodimers. Microtubules grow by the addition of GTP-tubulin dimers to the microtubule end, where a stabilizing cap forms. Below the cap, tubulin dimers are in GDP-bound state, owing to GTPase activity of alpha-tubulin. The sequence is that of Tubulin beta-2 chain (TUB2) from Colletotrichum gloeosporioides (Anthracnose fungus).